We begin with the raw amino-acid sequence, 317 residues long: Ribosomal protein L11 methyltransferase (317 aa).

The S-adenosyl-L-methionine site is built by T158, G179, D201, and N244.

Belongs to the methyltransferase superfamily. PrmA family.

Its subcellular location is the cytoplasm. It catalyses the reaction L-lysyl-[protein] + 3 S-adenosyl-L-methionine = N(6),N(6),N(6)-trimethyl-L-lysyl-[protein] + 3 S-adenosyl-L-homocysteine + 3 H(+). Functionally, methylates ribosomal protein L11. This is Ribosomal protein L11 methyltransferase from Streptococcus mutans serotype c (strain ATCC 700610 / UA159).